A 413-amino-acid chain; its full sequence is NPL4-like protein 1 (413 aa).

Ser-104 bears the Phosphoserine mark. Residues 131 to 272 (SVSFDRDCAN…ADVHFEPFQM (142 aa)) form the MPN domain.

Belongs to the NPL4 family.

It functions in the pathway protein degradation; proteasomal ubiquitin-dependent pathway. Its function is as follows. May be part of a complex that binds ubiquitinated proteins and that is necessary for the export of misfolded proteins from the ER to the cytoplasm, where they are degraded by the proteasome. The chain is NPL4-like protein 1 from Arabidopsis thaliana (Mouse-ear cress).